A 437-amino-acid polypeptide reads, in one-letter code: Adenylosuccinate synthetase (437 aa).

Residues 12-18 (GDEGKGK) and 40-42 (GHT) each bind GTP. Asp13 functions as the Proton acceptor in the catalytic mechanism. Mg(2+)-binding residues include Asp13 and Gly40. Residues 13–16 (DEGK), 38–41 (NAGH), Thr128, Arg142, Gln223, Thr238, and Arg302 each bind IMP. His41 serves as the catalytic Proton donor. 298–304 (TTTGRRR) lines the substrate pocket. Residues Arg304, 330–332 (KLD), and 412–414 (SLG) each bind GTP.

This sequence belongs to the adenylosuccinate synthetase family. As to quaternary structure, homodimer. Mg(2+) serves as cofactor.

The protein localises to the cytoplasm. The enzyme catalyses IMP + L-aspartate + GTP = N(6)-(1,2-dicarboxyethyl)-AMP + GDP + phosphate + 2 H(+). Its pathway is purine metabolism; AMP biosynthesis via de novo pathway; AMP from IMP: step 1/2. Plays an important role in the de novo pathway of purine nucleotide biosynthesis. Catalyzes the first committed step in the biosynthesis of AMP from IMP. This Synechococcus sp. (strain CC9311) protein is Adenylosuccinate synthetase.